Reading from the N-terminus, the 65-residue chain is Large ribosomal subunit protein bL35 (65 aa).

This sequence belongs to the bacterial ribosomal protein bL35 family.

This chain is Large ribosomal subunit protein bL35, found in Magnetococcus marinus (strain ATCC BAA-1437 / JCM 17883 / MC-1).